A 127-amino-acid chain; its full sequence is Small ribosomal subunit protein eS8 (127 aa).

This sequence belongs to the eukaryotic ribosomal protein eS8 family. In terms of assembly, part of the 30S ribosomal subunit.

This is Small ribosomal subunit protein eS8 from Pyrococcus furiosus (strain ATCC 43587 / DSM 3638 / JCM 8422 / Vc1).